A 266-amino-acid chain; its full sequence is 3-methyl-2-oxobutanoate hydroxymethyltransferase 2 (266 aa).

The Mg(2+) site is built by Asp-45 and Asp-84. Residues 45-46 (DS), Asp-84, and Lys-112 contribute to the 3-methyl-2-oxobutanoate site. Residue Glu-114 coordinates Mg(2+). Glu-181 functions as the Proton acceptor in the catalytic mechanism.

This sequence belongs to the PanB family. In terms of assembly, homodecamer; pentamer of dimers. Mg(2+) serves as cofactor.

It is found in the cytoplasm. It carries out the reaction 3-methyl-2-oxobutanoate + (6R)-5,10-methylene-5,6,7,8-tetrahydrofolate + H2O = 2-dehydropantoate + (6S)-5,6,7,8-tetrahydrofolate. The protein operates within cofactor biosynthesis; (R)-pantothenate biosynthesis; (R)-pantoate from 3-methyl-2-oxobutanoate: step 1/2. Catalyzes the reversible reaction in which hydroxymethyl group from 5,10-methylenetetrahydrofolate is transferred onto alpha-ketoisovalerate to form ketopantoate. The sequence is that of 3-methyl-2-oxobutanoate hydroxymethyltransferase 2 from Pseudomonas aeruginosa (strain ATCC 15692 / DSM 22644 / CIP 104116 / JCM 14847 / LMG 12228 / 1C / PRS 101 / PAO1).